A 322-amino-acid polypeptide reads, in one-letter code: Tetraacyldisaccharide 4'-kinase (322 aa).

54 to 61 lines the ATP pocket; it reads SVGGTGKT.

Belongs to the LpxK family.

It carries out the reaction a lipid A disaccharide + ATP = a lipid IVA + ADP + H(+). Its pathway is glycolipid biosynthesis; lipid IV(A) biosynthesis; lipid IV(A) from (3R)-3-hydroxytetradecanoyl-[acyl-carrier-protein] and UDP-N-acetyl-alpha-D-glucosamine: step 6/6. Transfers the gamma-phosphate of ATP to the 4'-position of a tetraacyldisaccharide 1-phosphate intermediate (termed DS-1-P) to form tetraacyldisaccharide 1,4'-bis-phosphate (lipid IVA). The sequence is that of Tetraacyldisaccharide 4'-kinase from Francisella philomiragia subsp. philomiragia (strain ATCC 25017 / CCUG 19701 / FSC 153 / O#319-036).